The chain runs to 21 residues: MIPAAFDYVAPSTVDEAVQAL.

As to quaternary structure, heterotrimer composed of an alpha, a beta and a gamma chain.

The sequence is that of Formate ester dehydrogenase beta chain from Amycolatopsis methanolica.